We begin with the raw amino-acid sequence, 398 residues long: Subtilisin-like serine protease EN45_076310 (398 aa).

Residues 1-19 (MGFLKLLSTSLATLAVVNA) form the signal peptide. A propeptide spans 20–115 (GKLLTANDGD…VEPDMVVNAT (96 aa)) (removed in mature form). One can recognise an Inhibitor I9 domain in the interval 35–113 (SYIVVMNDGV…KYVEPDMVVN (79 aa)). An N-linked (GlcNAc...) asparagine glycan is attached at Asn-113. An igE-binding region spans residues 124–134 (PSWGLSRISSK). Positions 125–398 (SWGLSRISSK…KLLYNGINAQ (274 aa)) constitute a Peptidase S8 domain. Catalysis depends on Asp-157, which acts as the Charge relay system. Residues 163 to 170 (GHADFGGR) form an igE-binding region. Residues 175-195 (TNTADNDDTDGNGHGTHTAST) form a disordered region. The active-site Charge relay system is His-188. An igE-binding region spans residues 227-245 (IAGMDWAVKDSKSRGATGK). Residue Asn-249 is glycosylated (N-linked (GlcNAc...) asparagine). An igE-binding region spans residues 310–318 (SFTNFGSVV). Ser-343 serves as the catalytic Charge relay system.

Belongs to the peptidase S8 family.

The protein localises to the secreted. With respect to regulation, inhibited by phenylmethanesulfonyl fluoride (PMSF) and diethyl pyrocarbonate (DEPC), but not by benzamidine. Its function is as follows. Serine protease that hydrolyzes casein, gelatin and human collagen type IV, but not elastin in vitro. Hydrolyzes OCLN of the human lung epithelial cells at 202-Gln-|-Ser-203 and Gln-211-|-Ile-212. This Penicillium chrysogenum (Penicillium notatum) protein is Subtilisin-like serine protease EN45_076310.